The following is a 299-amino-acid chain: Ectoine dioxygenase (299 aa).

Positions 1 to 40 (MTTTTTNVTDLYPTRGATEVATPRQDPVVWGSPDAPGPVS) are disordered. Gln-133 serves as a coordination point for L-ectoine. Position 139 (Lys-139) interacts with 2-oxoglutarate. His-150, Asp-152, and His-251 together coordinate Fe cation.

This sequence belongs to the PhyH family. EctD subfamily. In terms of assembly, homodimer. The cofactor is Fe(2+).

It catalyses the reaction L-ectoine + 2-oxoglutarate + O2 = 5-hydroxyectoine + succinate + CO2. Its function is as follows. Involved in the biosynthesis of 5-hydroxyectoine, called compatible solute, which helps organisms to survive extreme osmotic stress by acting as a highly soluble organic osmolyte. Catalyzes the 2-oxoglutarate-dependent selective hydroxylation of L-ectoine to yield (4S,5S)-5-hydroxyectoine. This chain is Ectoine dioxygenase, found in Streptomyces coelicolor (strain ATCC BAA-471 / A3(2) / M145).